The chain runs to 558 residues: CTP synthase (558 aa).

The amidoligase domain stretch occupies residues 1–270 (MTKYVFVTGG…DDLICRELDL (270 aa)). CTP is bound at residue Ser13. Ser13 is a UTP binding site. ATP-binding positions include 14–19 (SLGKGI) and Asp71. Residues Asp71 and Glu144 each coordinate Mg(2+). CTP is bound by residues 151–153 (DIE), 191–196 (KTKPTQ), and Lys227. UTP is bound by residues 191–196 (KTKPTQ) and Lys227. The 253-residue stretch at 295–547 (TIGMVGKYVE…ISAALEHQKK (253 aa)) folds into the Glutamine amidotransferase type-1 domain. Residue Gly356 participates in L-glutamine binding. Cys383 (nucleophile; for glutamine hydrolysis) is an active-site residue. Residues 384–387 (LGMQ), Glu407, and Arg473 contribute to the L-glutamine site. Catalysis depends on residues His520 and Glu522.

It belongs to the CTP synthase family. Homotetramer.

It carries out the reaction UTP + L-glutamine + ATP + H2O = CTP + L-glutamate + ADP + phosphate + 2 H(+). It catalyses the reaction L-glutamine + H2O = L-glutamate + NH4(+). The catalysed reaction is UTP + NH4(+) + ATP = CTP + ADP + phosphate + 2 H(+). It participates in pyrimidine metabolism; CTP biosynthesis via de novo pathway; CTP from UDP: step 2/2. With respect to regulation, allosterically activated by GTP, when glutamine is the substrate; GTP has no effect on the reaction when ammonia is the substrate. The allosteric effector GTP functions by stabilizing the protein conformation that binds the tetrahedral intermediate(s) formed during glutamine hydrolysis. Inhibited by the product CTP, via allosteric rather than competitive inhibition. Functionally, catalyzes the ATP-dependent amination of UTP to CTP with either L-glutamine or ammonia as the source of nitrogen. Regulates intracellular CTP levels through interactions with the four ribonucleotide triphosphates. This Polynucleobacter necessarius subsp. necessarius (strain STIR1) protein is CTP synthase.